A 102-amino-acid polypeptide reads, in one-letter code: COX assembly mitochondrial protein 2 homolog (102 aa).

One can recognise a CHCH domain in the interval 11–55; it reads TKECNMLIEFLQRCHSEKPIGKMIGKCSYWDEAVWQCTKKERIWR. Short sequence motifs (cx9C motif) lie at residues 14 to 24 and 37 to 47; these read CNMLIEFLQRC and CSYWDEAVWQC. 2 disulfides stabilise this stretch: C14-C47 and C24-C37.

This sequence belongs to the CMC family.

It is found in the mitochondrion. Functionally, may be involved in cytochrome c oxidase biogenesis. This chain is COX assembly mitochondrial protein 2 homolog, found in Caenorhabditis elegans.